The primary structure comprises 68 residues: Small cysteine-rich protein 2 (68 aa).

The N-terminal stretch at 1-24 is a signal peptide; it reads MAVKFHLCLLLIILVGMGAHVAFA.

It belongs to the Cnidaria small cysteine-rich protein (SCRiP) family. gamma subfamily. In terms of processing, contains 4 disulfide bonds.

It localises to the secreted. The protein resides in the nematocyst. Its function is as follows. Induces neurotoxic symptoms on zebrafish. Has also been claimed to be implied in calcification, but tests on homolog proteins suggest that proteins of this family have a neurotoxic function and not a calcification function. The sequence is that of Small cysteine-rich protein 2 from Orbicella faveolata (Mountainous star coral).